Reading from the N-terminus, the 366-residue chain is Alanine racemase (366 aa).

The active-site Proton acceptor; specific for D-alanine is the Lys-40. Lys-40 bears the N6-(pyridoxal phosphate)lysine mark. Substrate is bound at residue Arg-136. Tyr-263 functions as the Proton acceptor; specific for L-alanine in the catalytic mechanism. Met-310 is a substrate binding site.

It belongs to the alanine racemase family. Pyridoxal 5'-phosphate is required as a cofactor.

It catalyses the reaction L-alanine = D-alanine. It functions in the pathway amino-acid biosynthesis; D-alanine biosynthesis; D-alanine from L-alanine: step 1/1. Catalyzes the interconversion of L-alanine and D-alanine. May also act on other amino acids. This chain is Alanine racemase (alr), found in Streptococcus pyogenes serotype M1.